Reading from the N-terminus, the 1324-residue chain is Ubiquitin carboxyl-terminal hydrolase 42 (1324 aa).

Disordered stretches follow at residues 1 to 38 (MTIVDKASESSDPSAYQNQPGSSEAVSPGDMDAGSASW) and 63 to 87 (YSSSSVPDKSKPSPQKDQALGDGIA). Positions 10 to 25 (SSDPSAYQNQPGSSEA) are enriched in polar residues. Positions 63–80 (YSSSSVPDKSKPSPQKDQ) are enriched in low complexity. A Phosphoserine modification is found at Ser-75. One can recognise a USP domain in the interval 111–412 (AGLQNLGNTC…QAYVLFYIRS (302 aa)). Cys-120 (nucleophile) is an active-site residue. Residue His-371 is the Proton acceptor of the active site. 6 disordered regions span residues 452–494 (IGPQ…NRAS), 536–707 (QSQP…MPAP), 722–1026 (LSNK…RHRS), 1085–1131 (RAGL…HPDR), 1149–1254 (DRFH…VKDS), and 1275–1294 (GGFPLSGGPPLEGVGPFREK). The span at 477 to 489 (PSSSMSSPNGNSS) shows a compositional bias: low complexity. Ser-483 bears the Phosphoserine mark. Polar residues predominate over residues 536–564 (QSQPNLHSNSLENPTKPVPSSTITNSAVQ). Over residues 565-576 (STSNASTMSVSS) the composition is skewed to low complexity. Residues 586–603 (ESCSQPVMNGKSKLNSSV) show a composition bias toward polar residues. Residues Ser-754 and Ser-856 each carry the phosphoserine modification. Composition is skewed to basic and acidic residues over residues 938–974 (AKEKIGSLRKVDRGHYRSRRERSSSGEPARESRSKTE), 984–1013 (CPRERDRQDRHAPEHHPGHGDRLSPGERRS), 1101–1113 (RGCEPARERERHR), 1149–1158 (DRFHEHENGK), and 1165–1191 (DSVENSDSHVEKKARRSEQKDPLEEPK). Phosphoserine is present on Ser-1181. A compositionally biased stretch (basic residues) spans 1192 to 1206 (AKKHKKSKKKKKSKD). Basic and acidic residues predominate over residues 1207–1218 (KHRDRDSRHQQD). Phosphoserine occurs at positions 1219, 1222, and 1226. Basic residues predominate over residues 1231–1245 (HRHKKKKKKKKRHSR). Ser-1247 carries the post-translational modification Phosphoserine.

This sequence belongs to the peptidase C19 family. Broadly expressed.

It carries out the reaction Thiol-dependent hydrolysis of ester, thioester, amide, peptide and isopeptide bonds formed by the C-terminal Gly of ubiquitin (a 76-residue protein attached to proteins as an intracellular targeting signal).. Functionally, deubiquitinating enzyme which may play an important role during spermatogenesis. In Homo sapiens (Human), this protein is Ubiquitin carboxyl-terminal hydrolase 42 (USP42).